Consider the following 654-residue polypeptide: Acetyl-coenzyme A synthetase (654 aa).

CoA-binding positions include 196–199 (RGGK) and threonine 316. Residues 392–394 (GEP), 416–421 (DTWWQT), aspartate 507, and arginine 522 each bind ATP. Residue serine 530 coordinates CoA. Residue arginine 533 coordinates ATP. Valine 544 and valine 549 together coordinate Mg(2+). Position 619 is an N6-acetyllysine (lysine 619).

This sequence belongs to the ATP-dependent AMP-binding enzyme family. The cofactor is Mg(2+). Post-translationally, acetylated. Deacetylation by the SIR2-homolog deacetylase activates the enzyme.

It carries out the reaction acetate + ATP + CoA = acetyl-CoA + AMP + diphosphate. Functionally, catalyzes the conversion of acetate into acetyl-CoA (AcCoA), an essential intermediate at the junction of anabolic and catabolic pathways. AcsA undergoes a two-step reaction. In the first half reaction, AcsA combines acetate with ATP to form acetyl-adenylate (AcAMP) intermediate. In the second half reaction, it can then transfer the acetyl group from AcAMP to the sulfhydryl group of CoA, forming the product AcCoA. The polypeptide is Acetyl-coenzyme A synthetase (Chromobacterium violaceum (strain ATCC 12472 / DSM 30191 / JCM 1249 / CCUG 213 / NBRC 12614 / NCIMB 9131 / NCTC 9757 / MK)).